A 492-amino-acid polypeptide reads, in one-letter code: 3-octaprenyl-4-hydroxybenzoate carboxy-lyase (492 aa).

N177 contacts Mn(2+). Residues 180-182 (IYR), 194-196 (RWL), and 199-200 (RG) each bind prenylated FMN. A Mn(2+)-binding site is contributed by E243. D292 serves as the catalytic Proton donor.

It belongs to the UbiD family. In terms of assembly, homohexamer. It depends on prenylated FMN as a cofactor. Mn(2+) is required as a cofactor.

It is found in the cell membrane. It catalyses the reaction a 4-hydroxy-3-(all-trans-polyprenyl)benzoate + H(+) = a 2-(all-trans-polyprenyl)phenol + CO2. The protein operates within cofactor biosynthesis; ubiquinone biosynthesis. In terms of biological role, catalyzes the decarboxylation of 3-octaprenyl-4-hydroxy benzoate to 2-octaprenylphenol, an intermediate step in ubiquinone biosynthesis. The chain is 3-octaprenyl-4-hydroxybenzoate carboxy-lyase from Neisseria meningitidis serogroup C / serotype 2a (strain ATCC 700532 / DSM 15464 / FAM18).